The primary structure comprises 207 residues: Large ribosomal subunit protein uL4 (207 aa).

The segment at 50-75 (KTKTVSEVSGTTKKPFKQKGTGNARQ) is disordered.

Belongs to the universal ribosomal protein uL4 family. As to quaternary structure, part of the 50S ribosomal subunit.

In terms of biological role, one of the primary rRNA binding proteins, this protein initially binds near the 5'-end of the 23S rRNA. It is important during the early stages of 50S assembly. It makes multiple contacts with different domains of the 23S rRNA in the assembled 50S subunit and ribosome. Functionally, forms part of the polypeptide exit tunnel. This chain is Large ribosomal subunit protein uL4, found in Rickettsia felis (strain ATCC VR-1525 / URRWXCal2) (Rickettsia azadi).